Consider the following 226-residue polypeptide: ATP synthase subunit a (226 aa).

Helical transmembrane passes span 22–42 (SMNW…FWLI), 73–93 (IIIF…SLIP), 102–122 (LLLN…YLIY), 135–155 (LNSP…SLII), 173–193 (LILT…PINL), and 202–222 (LEIF…ILYF).

This sequence belongs to the ATPase A chain family. In terms of assembly, F-type ATPases have 2 components, CF(1) - the catalytic core - and CF(0) - the membrane proton channel. CF(1) has five subunits: alpha(3), beta(3), gamma(1), delta(1), epsilon(1). CF(0) has three main subunits: a, b and c.

Its subcellular location is the mitochondrion inner membrane. Functionally, mitochondrial membrane ATP synthase (F(1)F(0) ATP synthase or Complex V) produces ATP from ADP in the presence of a proton gradient across the membrane which is generated by electron transport complexes of the respiratory chain. F-type ATPases consist of two structural domains, F(1) - containing the extramembraneous catalytic core and F(0) - containing the membrane proton channel, linked together by a central stalk and a peripheral stalk. During catalysis, ATP synthesis in the catalytic domain of F(1) is coupled via a rotary mechanism of the central stalk subunits to proton translocation. Key component of the proton channel; it may play a direct role in the translocation of protons across the membrane. The polypeptide is ATP synthase subunit a (ATP6) (Apis mellifera ligustica (Common honeybee)).